The chain runs to 852 residues: Exported protein YdbA (852 aa).

A signal peptide spans 1–21 (MQRKTLLSACIALALSGQGWA). Disordered stretches follow at residues 30–50 (TTGEKKNTNVTCPADPGKLSP), 91–145 (DDDH…FNND), 307–354 (TITN…QDGD), 407–449 (TNGG…KVIQ), and 506–531 (NGGTGTQINGNDATANNSGKTTVDGK). Over residues 307–319 (TITNGGTGTQING) the composition is skewed to low complexity. A compositionally biased stretch (polar residues) spans 339 to 348 (GTEINGNNGK). The segment covering 506-516 (NGGTGTQINGN) has biased composition (low complexity). A compositionally biased stretch (polar residues) spans 517 to 526 (DATANNSGKT).

The protein localises to the secreted. The full-length protein (which is about 2000 amino acids long) is part of the autotransporter family. The sequence is that of Exported protein YdbA (ydbA) from Escherichia coli (strain K12).